The following is a 447-amino-acid chain: Acyl-CoA (8-3)-desaturase (447 aa).

M1 carries the post-translational modification N-acetylmethionine. At 1-124 the chain is on the cytoplasmic side; sequence MAPDPVPTPG…FRELRATVER (124 aa). The 79-residue stretch at 19 to 97 folds into the Cytochrome b5 heme-binding domain; it reads TRYFTWEEVA…MNSLLIGELA (79 aa). The chain crosses the membrane as a helical span at residues 125–145; it reads MGLMKANHLFFLVYLLHILLL. Residues 146–160 are Lumenal-facing; it reads DVAAWLTLWIFGTSL. The helical transmembrane segment at 161–180 threads the bilayer; the sequence is VPFILCAVLLSTVQAQAGWL. The Cytoplasmic portion of the chain corresponds to 181–268; it reads QHDFGHLSVF…HMPYNHQHKY (88 aa). Positions 182–186 match the Histidine box-1 motif; that stretch reads HDFGH. Positions 219-223 match the Histidine box-2 motif; that stretch reads HFQHH. A helical transmembrane segment spans residues 269 to 289; the sequence is FFLIGPPALLPLYFQWYIFYF. The Lumenal portion of the chain corresponds to 290–308; the sequence is VVQRKKWVDLAWMLSFYAR. The chain crosses the membrane as a helical span at residues 309-329; the sequence is IFFTYMPLLGLKGFLGLFFIV. Residues 330 to 447 lie on the Cytoplasmic side of the membrane; sequence RFLESNWFVW…QLWLDAYLHQ (118 aa). A Histidine box-3 motif is present at residues 385-389; the sequence is QIEHH.

This sequence belongs to the fatty acid desaturase type 1 family. As to expression, highly expressed in the adrenal gland, liver, brain, and testis, tissues where lipogenesis and steroidogenesis are active. Expressed in colonic mucosa.

Its subcellular location is the endoplasmic reticulum membrane. It is found in the mitochondrion. It catalyses the reaction (8Z,11Z,14Z)-eicosatrienoyl-CoA + 2 Fe(II)-[cytochrome b5] + O2 + 2 H(+) = (5Z,8Z,11Z,14Z)-eicosatetraenoyl-CoA + 2 Fe(III)-[cytochrome b5] + 2 H2O. It carries out the reaction (8Z,11Z,14Z,17Z)-eicosatetraenoyl-CoA + 2 Fe(II)-[cytochrome b5] + O2 + 2 H(+) = (5Z,8Z,11Z,14Z,17Z)-eicosapentaenoyl-CoA + 2 Fe(III)-[cytochrome b5] + 2 H2O. The enzyme catalyses (11E)-octadecenoyl-CoA + 2 Fe(II)-[cytochrome b5] + O2 + 2 H(+) = (5Z,11E)-octadecadienoyl-CoA + 2 Fe(III)-[cytochrome b5] + 2 H2O. It functions in the pathway lipid metabolism; polyunsaturated fatty acid biosynthesis. Functionally, acts as a front-end fatty acyl-coenzyme A (CoA) desaturase that introduces a cis double bond at carbon 5 located between a preexisting double bond and the carboxyl end of the fatty acyl chain. Involved in biosynthesis of highly unsaturated fatty acids (HUFA) from the essential polyunsaturated fatty acids (PUFA) linoleic acid (LA) (18:2n-6) and alpha-linolenic acid (ALA) (18:3n-3) precursors. Specifically, desaturates dihomo-gamma-linoleoate (DGLA) (20:3n-6) and eicosatetraenoate (ETA) (20:4n-3) to generate arachidonate (AA) (20:4n-6) and eicosapentaenoate (EPA) (20:5n-3), respectively. As a rate limiting enzyme for DGLA (20:3n-6) and AA (20:4n-6)-derived eicosanoid biosynthesis, controls the metabolism of inflammatory lipids like prostaglandin E2, critical for efficient acute inflammatory response and maintenance of epithelium homeostasis. Contributes to membrane phospholipid biosynthesis by providing AA (20:4n-6) as a major acyl chain esterified into phospholipids. In particular, regulates phosphatidylinositol-4,5-bisphosphate levels, modulating inflammatory cytokine production in T-cells. Also desaturates (11E)-octadecenoate (trans-vaccenoate)(18:1n-9), a metabolite in the biohydrogenation pathway of LA (18:2n-6). This chain is Acyl-CoA (8-3)-desaturase, found in Mus musculus (Mouse).